The following is a 326-amino-acid chain: Eukaryotic translation initiation factor 3 subunit I (326 aa).

WD repeat units follow at residues 8–47 (GHER…RLGT), 50–89 (GHQG…VIAS), 145–184 (MTES…KVVD), 188–227 (DHSA…CLKT), and 285–326 (GHFG…NIFE).

This sequence belongs to the eIF-3 subunit I family. Component of the eukaryotic translation initiation factor 3 (eIF-3) complex. The eIF-3 complex interacts with pix.

It localises to the cytoplasm. In terms of biological role, component of the eukaryotic translation initiation factor 3 (eIF-3) complex, which is involved in protein synthesis of a specialized repertoire of mRNAs and, together with other initiation factors, stimulates binding of mRNA and methionyl-tRNAi to the 40S ribosome. The eIF-3 complex specifically targets and initiates translation of a subset of mRNAs involved in cell proliferation. This Drosophila simulans (Fruit fly) protein is Eukaryotic translation initiation factor 3 subunit I.